Consider the following 513-residue polypeptide: Cytochrome P450 72A552 (513 aa).

The chain crosses the membrane as a helical span at residues 2–22 (EISVASVTVSVVIAVVTWWVW). Cys-460 lines the heme pocket.

It belongs to the cytochrome P450 family. Heme is required as a cofactor.

It is found in the membrane. The catalysed reaction is oleanolate + reduced [NADPH--hemoprotein reductase] + O2 = hederagenin + oxidized [NADPH--hemoprotein reductase] + H2O + H(+). In terms of biological role, catalyzes the oxidation of oleanolate at the C-23 position to form hederagenin. This is Cytochrome P450 72A552 from Barbarea vulgaris (Yellow rocket).